Consider the following 589-residue polypeptide: Protein drl-1 (589 aa).

A disordered region spans residues 1–51 (MHSEEKYLHIPNNTKYPEIIVEEEEEDPSEEERSELSETDDVATPLRPSDT). Residues 20-41 (IVEEEEEDPSEEERSELSETDD) are compositionally biased toward acidic residues. Residues 97 to 373 (WRINEDVMKD…QNLLESHGSK (277 aa)) form the Protein kinase domain. Helical transmembrane passes span 429–449 (GFIPFIRWYMSRILIFSVLLV), 456–476 (LCAALSLAAVAGGVFFAIFLI), and 491–511 (GFVVLIALILLPIIILLTTLC).

It belongs to the protein kinase superfamily. STE Ser/Thr protein kinase family. Expressed in vulval and body wall muscles, hypodermis, seam cells and tissues next to pharynx and anus.

The protein resides in the membrane. Functionally, negatively regulates lifespan and health span probably by participating in nutrient sensing. The chain is Protein drl-1 from Caenorhabditis elegans.